A 376-amino-acid polypeptide reads, in one-letter code: Glucose-1-phosphate adenylyltransferase (376 aa).

Alpha-D-glucose 1-phosphate contacts are provided by residues Y101, G166, 181 to 182 (EK), and S192.

Belongs to the bacterial/plant glucose-1-phosphate adenylyltransferase family. As to quaternary structure, homotetramer.

The catalysed reaction is alpha-D-glucose 1-phosphate + ATP + H(+) = ADP-alpha-D-glucose + diphosphate. The protein operates within glycan biosynthesis; glycogen biosynthesis. Its function is as follows. Involved in the biosynthesis of ADP-glucose, a building block required for the elongation reactions to produce glycogen. Catalyzes the reaction between ATP and alpha-D-glucose 1-phosphate (G1P) to produce pyrophosphate and ADP-Glc. This Bacillus mycoides (strain KBAB4) (Bacillus weihenstephanensis) protein is Glucose-1-phosphate adenylyltransferase.